The primary structure comprises 483 residues: Glutamyl-tRNA(Gln) amidotransferase subunit A (483 aa).

Catalysis depends on charge relay system residues Lys-77 and Ser-152. The active-site Acyl-ester intermediate is Ser-176.

It belongs to the amidase family. GatA subfamily. In terms of assembly, heterotrimer of A, B and C subunits.

The enzyme catalyses L-glutamyl-tRNA(Gln) + L-glutamine + ATP + H2O = L-glutaminyl-tRNA(Gln) + L-glutamate + ADP + phosphate + H(+). Allows the formation of correctly charged Gln-tRNA(Gln) through the transamidation of misacylated Glu-tRNA(Gln) in organisms which lack glutaminyl-tRNA synthetase. The reaction takes place in the presence of glutamine and ATP through an activated gamma-phospho-Glu-tRNA(Gln). This chain is Glutamyl-tRNA(Gln) amidotransferase subunit A, found in Listeria monocytogenes serotype 4a (strain HCC23).